The sequence spans 204 residues: Casparian strip membrane protein 2 (204 aa).

The Cytoplasmic segment spans residues 1-42 (MKNESTFIDVPAESSSAMKGKAPLIGVARDHTTSGSGGYNRG). A helical transmembrane segment spans residues 43-63 (LAIFDFLLRLAAIVAALAAAA). Over 64–92 (TMGTSDETLPFFTQFLQFEASYDDLPTFQ) the chain is Extracellular. Residues 93–113 (FFVIAMALVGGYLVLSLPISV) form a helical membrane-spanning segment. Topologically, residues 114–125 (VTILRPLATAPR) are cytoplasmic. The helical transmembrane segment at 126–146 (LLLLVLDTGVLALNTAAASSA) threads the bilayer. At 147 to 178 (AAISYLAHSGNQNTNWLPICQQFGDFCQKSSG) the chain is on the extracellular side. Residues 179–199 (AVVSAFVSVVFFTILVVISGV) traverse the membrane as a helical segment. The Cytoplasmic segment spans residues 200–204 (ALKRH).

Belongs to the Casparian strip membrane proteins (CASP) family. As to quaternary structure, homodimer and heterodimers with other CASP proteins. Interacts with CASP1, CASP3 and CASP4.

It is found in the cell membrane. Its function is as follows. Regulates membrane-cell wall junctions and localized cell wall deposition. Required for establishment of the Casparian strip membrane domain (CSD) and the subsequent formation of Casparian strips, a cell wall modification of the root endodermis that determines an apoplastic barrier between the intraorganismal apoplasm and the extraorganismal apoplasm and prevents lateral diffusion. The sequence is that of Casparian strip membrane protein 2 (CASP2) from Arabidopsis thaliana (Mouse-ear cress).